A 475-amino-acid chain; its full sequence is Aspartyl/glutamyl-tRNA(Asn/Gln) amidotransferase subunit B (475 aa).

It belongs to the GatB/GatE family. GatB subfamily. In terms of assembly, heterotrimer of A, B and C subunits.

The enzyme catalyses L-glutamyl-tRNA(Gln) + L-glutamine + ATP + H2O = L-glutaminyl-tRNA(Gln) + L-glutamate + ADP + phosphate + H(+). It catalyses the reaction L-aspartyl-tRNA(Asn) + L-glutamine + ATP + H2O = L-asparaginyl-tRNA(Asn) + L-glutamate + ADP + phosphate + 2 H(+). Functionally, allows the formation of correctly charged Asn-tRNA(Asn) or Gln-tRNA(Gln) through the transamidation of misacylated Asp-tRNA(Asn) or Glu-tRNA(Gln) in organisms which lack either or both of asparaginyl-tRNA or glutaminyl-tRNA synthetases. The reaction takes place in the presence of glutamine and ATP through an activated phospho-Asp-tRNA(Asn) or phospho-Glu-tRNA(Gln). The sequence is that of Aspartyl/glutamyl-tRNA(Asn/Gln) amidotransferase subunit B from Bacillus thuringiensis subsp. konkukian (strain 97-27).